A 323-amino-acid polypeptide reads, in one-letter code: Ferrochelatase (323 aa).

Positions 196 and 277 each coordinate Fe cation.

Belongs to the ferrochelatase family.

It localises to the cytoplasm. It carries out the reaction heme b + 2 H(+) = protoporphyrin IX + Fe(2+). It participates in porphyrin-containing compound metabolism; protoheme biosynthesis; protoheme from protoporphyrin-IX: step 1/1. Its function is as follows. Catalyzes the ferrous insertion into protoporphyrin IX. This is Ferrochelatase from Haemophilus influenzae (strain PittEE).